The sequence spans 304 residues: E3 ubiquitin-protein ligase BOI (304 aa).

The tract at residues 178 to 214 (LQERVKSLYVENQIWRDIAQTNEANANTLRTNLDQVL) is WRD domain. Residues 197–220 (QTNEANANTLRTNLDQVLAQLETF) adopt a coiled-coil conformation. An RING-type zinc finger spans residues 254 to 291 (CKRCGEREASVLVLPCRHLCLCTVCGGSALLRTCPVCD).

Interacts with MYB108/BOS1 and the DELLA proteins GAI, RGA, RGL1, RGL2 and RGL3. As to expression, expressed in leaves, siliques, roots, flowering tissues and stigma tips.

The protein resides in the nucleus. The catalysed reaction is S-ubiquitinyl-[E2 ubiquitin-conjugating enzyme]-L-cysteine + [acceptor protein]-L-lysine = [E2 ubiquitin-conjugating enzyme]-L-cysteine + N(6)-ubiquitinyl-[acceptor protein]-L-lysine.. It participates in protein degradation; proteasomal ubiquitin-dependent pathway. Functionally, E3 ubiquitin-protein ligase involved in the regulation of pathogen and abiotic stress responses by facilitating degradation of MYB108/BOI. Attenuates cell death by preventing caspase activation. Has no effect on the stability of the DELLA proteins. Not regulated by MYB108/BOI. This Arabidopsis thaliana (Mouse-ear cress) protein is E3 ubiquitin-protein ligase BOI (BOI).